A 309-amino-acid polypeptide reads, in one-letter code: tRNA dimethylallyltransferase (309 aa).

11 to 18 (GPTATGKS) is an ATP binding site. Residue 13–18 (TATGKS) coordinates substrate.

The protein belongs to the IPP transferase family. As to quaternary structure, monomer. Mg(2+) is required as a cofactor.

It catalyses the reaction adenosine(37) in tRNA + dimethylallyl diphosphate = N(6)-dimethylallyladenosine(37) in tRNA + diphosphate. Catalyzes the transfer of a dimethylallyl group onto the adenine at position 37 in tRNAs that read codons beginning with uridine, leading to the formation of N6-(dimethylallyl)adenosine (i(6)A). In Rhodococcus jostii (strain RHA1), this protein is tRNA dimethylallyltransferase.